We begin with the raw amino-acid sequence, 370 residues long: Phosphate acyltransferase (370 aa).

Belongs to the PlsX family. Homodimer. Probably interacts with PlsY.

Its subcellular location is the cytoplasm. It carries out the reaction a fatty acyl-[ACP] + phosphate = an acyl phosphate + holo-[ACP]. It participates in lipid metabolism; phospholipid metabolism. In terms of biological role, catalyzes the reversible formation of acyl-phosphate (acyl-PO(4)) from acyl-[acyl-carrier-protein] (acyl-ACP). This enzyme utilizes acyl-ACP as fatty acyl donor, but not acyl-CoA. The polypeptide is Phosphate acyltransferase (Polaromonas naphthalenivorans (strain CJ2)).